The chain runs to 462 residues: Trigger factor (462 aa).

Positions 172–257 (GDKATIDFVG…LKALAAPGET (86 aa)) constitute a PPIase FKBP-type domain. Residues 443–462 (LLAADEEDEEEAAESSAALV) are disordered. A compositionally biased stretch (acidic residues) spans 444 to 455 (LAADEEDEEEAA).

This sequence belongs to the FKBP-type PPIase family. Tig subfamily.

It is found in the cytoplasm. The enzyme catalyses [protein]-peptidylproline (omega=180) = [protein]-peptidylproline (omega=0). In terms of biological role, involved in protein export. Acts as a chaperone by maintaining the newly synthesized protein in an open conformation. Functions as a peptidyl-prolyl cis-trans isomerase. The polypeptide is Trigger factor (Methylocella silvestris (strain DSM 15510 / CIP 108128 / LMG 27833 / NCIMB 13906 / BL2)).